The sequence spans 378 residues: MIPKEEVERPQKKTKLPSLPCETSLFLQLPDEILVNCLARLSKSSYRSLSLVCKTFRSLLHSQPLYSARYQLGTTEICCLYLCLRFVTATEPVSRWFTLSRRSGSVLVPSDHSLPYSNSTVTMGSKIYGEHMGDAFGPSSAIWIYDCFTRSWGDVPNMKMKRENASACVLDDKIYVMGGCDSGGINWFEMFDVKTQCWRPLPANPDVKVMTEDNVRKIDVVGGKIYVKTGAEFMDWIYDVKRGKWSAADEYMSLLWSNSWCVIENVMYCYSCSRYRWYDLEARMWREVKGLKYLKRYSSASNDNRNRMVELVNFGGKLAILWDRFERPGRSENKNIWCAMVALNRDFEGEIWGTVEWLNVVLTVPKSYNFLRPIAVSV.

An F-box domain is found at 23-69 (TSLFLQLPDEILVNCLARLSKSSYRSLSLVCKTFRSLLHSQPLYSAR). Kelch repeat units follow at residues 124-172 (GSKI…VLDD), 173-218 (KIYV…VRKI), 220-259 (VVGG…WSNS), and 260-305 (WCVI…NDNR).

The chain is F-box/kelch-repeat protein At4g29370 from Arabidopsis thaliana (Mouse-ear cress).